The following is a 522-amino-acid chain: MEPEGRGSLFEDSDLLHAGNPKENDVTAVLLTPGSQELMIRDMAEALTQWRQLNSPQGDVPEKPRNLVLLGLPISTPDVISQLEHEEELEREVSKAASQKHWETIPESKELTPEKDISEEESAPGVLIVRFSKESSSECEDSLESQQENHEKHLIQEAVTEKSSRERSYQSDEFRRNCTQRSLLVQQQGERLHHCDSFKNNLKQNSDIIRHERICAGKKPWKCNECEKAFSYYSAFVLHQRIHTGEKPYECNECGKAFSQSIHLTLHQRIHTGEKPYECHECGKAFSHRSALIRHHIIHTGEKPYECNECGKAFNQSSYLTQHQRIHTGEKPYECNECGKAFSQSTFLTQHQVIHTGEKPYKCNECGKAFSDRSGLIQHQRTHTGERPYECNECGKAFGYCSALTQHQRTHTGEKPYKCNDCAKAFSDRSALIRHQRTHTGEKPYKCKDCGKAFSQSSSLTKHQKTHTGEKPYKCKECGKAFSQSSSLSQHQKTHAGVKTKKYVQALSEHLTFGQHKRIHTG.

2 disordered regions span residues 1–22 and 96–124; these read MEPE…GNPK and AASQ…ESAP. Over residues 100–116 the composition is skewed to basic and acidic residues; the sequence is KHWETIPESKELTPEKD. C2H2-type zinc fingers lie at residues 221-243, 249-271, 277-299, 305-327, 333-355, 361-383, 389-411, 417-439, 445-467, and 473-495; these read WKCN…QRIH, YECN…QRIH, YECH…HIIH, YECN…QVIH, YKCN…QRTH, YECN…QRTH, and YKCK…QKTH.

This sequence belongs to the krueppel C2H2-type zinc-finger protein family.

It localises to the nucleus. Functionally, may be involved in transcriptional regulation. The polypeptide is Zinc finger protein 892 (Homo sapiens (Human)).